A 144-amino-acid chain; its full sequence is Deoxyuridine 5'-triphosphate nucleotidohydrolase (144 aa).

Residues 63-65 (RSG), N76, and 80-82 (TID) contribute to the substrate site.

It belongs to the dUTPase family. It depends on Mg(2+) as a cofactor.

The catalysed reaction is dUTP + H2O = dUMP + diphosphate + H(+). It functions in the pathway pyrimidine metabolism; dUMP biosynthesis; dUMP from dCTP (dUTP route): step 2/2. In terms of biological role, this enzyme is involved in nucleotide metabolism: it produces dUMP, the immediate precursor of thymidine nucleotides and it decreases the intracellular concentration of dUTP so that uracil cannot be incorporated into DNA. This is Deoxyuridine 5'-triphosphate nucleotidohydrolase from Bacteroides thetaiotaomicron (strain ATCC 29148 / DSM 2079 / JCM 5827 / CCUG 10774 / NCTC 10582 / VPI-5482 / E50).